The following is a 160-amino-acid chain: CXXC motif containing zinc binding protein (160 aa).

Residues Cys33, Cys36, Cys67, and Cys70 each coordinate Zn(2+). Ser75 bears the Phosphoserine mark.

It belongs to the UPF0587 family. As to quaternary structure, monomer.

This Homo sapiens (Human) protein is CXXC motif containing zinc binding protein.